A 493-amino-acid polypeptide reads, in one-letter code: 3-octaprenyl-4-hydroxybenzoate carboxy-lyase (493 aa).

N172 contacts Mn(2+). Residues I175–R177, R189–L191, and R194–G195 contribute to the prenylated FMN site. E238 is a binding site for Mn(2+). D287 (proton donor) is an active-site residue.

Belongs to the UbiD family. As to quaternary structure, homohexamer. The cofactor is prenylated FMN. Mn(2+) serves as cofactor.

The protein localises to the cell membrane. The catalysed reaction is a 4-hydroxy-3-(all-trans-polyprenyl)benzoate + H(+) = a 2-(all-trans-polyprenyl)phenol + CO2. The protein operates within cofactor biosynthesis; ubiquinone biosynthesis. Catalyzes the decarboxylation of 3-octaprenyl-4-hydroxy benzoate to 2-octaprenylphenol, an intermediate step in ubiquinone biosynthesis. The sequence is that of 3-octaprenyl-4-hydroxybenzoate carboxy-lyase from Shewanella sp. (strain ANA-3).